Here is a 296-residue protein sequence, read N- to C-terminus: Beta-lactamase (296 aa).

A signal peptide spans 1-21 (MKAYFIAILTLFTCIATVVRA). Serine 66 (acyl-ester intermediate) is an active-site residue. 235 to 237 (KTG) lines the substrate pocket.

It belongs to the class-A beta-lactamase family.

The catalysed reaction is a beta-lactam + H2O = a substituted beta-amino acid. The chain is Beta-lactamase (cblA) from Bacteroides uniformis.